The primary structure comprises 529 residues: Cytochrome P450 monooxygenase patI (529 aa).

The Cytoplasmic segment spans residues 1-8; that stretch reads MDFTQVPP. A helical membrane pass occupies residues 9 to 25; that stretch reads SYILGVLLSSTSILFCL. At 26 to 529 the chain is on the lumenal side; it reads KYLLRSGYRP…EAQGVFSRFD (504 aa). N-linked (GlcNAc...) asparagine glycans are attached at residues Asn-81 and Asn-383. Cys-449 lines the heme pocket.

The protein belongs to the cytochrome P450 family. Heme is required as a cofactor.

Its subcellular location is the endoplasmic reticulum membrane. It carries out the reaction 3-hydroxybenzyl alcohol + reduced [NADPH--hemoprotein reductase] + O2 = gentisyl alcohol + oxidized [NADPH--hemoprotein reductase] + H2O + H(+). Its pathway is mycotoxin biosynthesis; patulin biosynthesis. Functionally, cytochrome P450 monooxygenase; part of the gene cluster that mediates the biosynthesis of patulin, an acetate-derived tetraketide mycotoxin produced by several fungal species that shows antimicrobial properties against several bacteria. PatI catalyzes the conversion of m-hydroxybenzyl alcohol into gentisyl alcohol. The pathway begins with the synthesis of 6-methylsalicylic acid by the polyketide synthase (PKS) patK via condensation of acetate and malonate units. The 6-methylsalicylic acid decarboxylase patG then catalyzes the decarboxylation of 6-methylsalicylic acid to yield m-cresol (also known as 3-methylphenol). These first reactions occur in the cytosol. The intermediate m-cresol is then transported into the endoplasmic reticulum where the cytochrome P450 monooxygenase patH converts it to m-hydroxybenzyl alcohol, which is further converted to gentisyl alcohol by the cytochrome P450 monooxygenase patI. The oxidoreductases patJ and patO further convert gentisyl alcohol to isoepoxydon in the vacuole. PatN catalyzes then the transformation of isoepoxydon into phyllostine. The cluster protein patF is responsible for the conversion from phyllostine to neopatulin whereas the alcohol dehydrogenase patD converts neopatulin to E-ascladiol. The steps between isoepoxydon and E-ascladiol occur in the cytosol, and E-ascladiol is probably secreted to the extracellular space by one of the cluster-specific transporters patC or patM. Finally, the secreted patulin synthase patE catalyzes the conversion of E-ascladiol to patulin. This chain is Cytochrome P450 monooxygenase patI, found in Aspergillus clavatus (strain ATCC 1007 / CBS 513.65 / DSM 816 / NCTC 3887 / NRRL 1 / QM 1276 / 107).